Consider the following 154-residue polypeptide: Ubiquitin-like protein 4A-A (154 aa).

One can recognise a Ubiquitin-like domain in the interval Met1–Glu76.

In terms of assembly, component of the BAT3 complex.

It localises to the cytoplasm. The protein localises to the cytosol. Functionally, component of the BAT3 complex, a multiprotein complex involved in the post-translational delivery of tail-anchored (TA) membrane proteins to the endoplasmic reticulum membrane. TA membrane proteins, also named type II transmembrane proteins, contain a single C-terminal transmembrane region. This is Ubiquitin-like protein 4A-A (ubl4aa) from Salmo salar (Atlantic salmon).